A 266-amino-acid polypeptide reads, in one-letter code: Biotin--[acetyl-CoA-carboxylase] ligase (266 aa).

The region spanning 14 to 202 (RSLRDQLIGA…ELEARIIQWR (189 aa)) is the BPL/LPL catalytic domain. Biotin is bound by residues 38–39 (ST), Gln-63, Arg-67, and Lys-138.

The protein belongs to the biotin--protein ligase family. In terms of assembly, monomer in solution. Forms dimers under specific crystallization conditions.

The catalysed reaction is biotin + L-lysyl-[protein] + ATP = N(6)-biotinyl-L-lysyl-[protein] + AMP + diphosphate + H(+). It carries out the reaction biotin + ATP + H(+) = biotinyl-5'-AMP + diphosphate. It catalyses the reaction biotinyl-5'-AMP + L-lysyl-[protein] = N(6)-biotinyl-L-lysyl-[protein] + AMP + 2 H(+). With respect to regulation, binding of biotin and ATP significantly increases the thermal stability of BirA and leads to the formation of a high affinity holoenzyme complex. Catalyzes the transfer of biotin onto a conserved lysine residue of the biotin carboxyl carrier protein (BCCP) domain of acetyl-CoA carboxylase and converts it to active holo-BCCP. Forms an acyl-adenylate intermediate. Cannot use GTP or desthiobiotin. This chain is Biotin--[acetyl-CoA-carboxylase] ligase, found in Mycobacterium tuberculosis (strain ATCC 25618 / H37Rv).